Reading from the N-terminus, the 340-residue chain is Probable serine acetyltransferase 5 (340 aa).

Low complexity-rich tracts occupy residues 1 to 17 (MLVV…RVAA) and 54 to 64 (PAEVVPAFAPP). The tract at residues 1–67 (MLVVVARKSS…VPAFAPPESE (67 aa)) is disordered.

This sequence belongs to the transferase hexapeptide repeat family. In terms of assembly, homomultimer.

It catalyses the reaction L-serine + acetyl-CoA = O-acetyl-L-serine + CoA. The protein operates within amino-acid biosynthesis; L-cysteine biosynthesis; L-cysteine from L-serine: step 1/2. This Oryza sativa subsp. japonica (Rice) protein is Probable serine acetyltransferase 5 (SAT5).